Consider the following 137-residue polypeptide: Ribonuclease VapC18 (137 aa).

Residues Cys-4–Gln-126 enclose the PINc domain. The Mg(2+) site is built by Asp-6 and Asp-96.

It belongs to the PINc/VapC protein family. It depends on Mg(2+) as a cofactor.

In terms of biological role, toxic component of a type II toxin-antitoxin (TA) system. An RNase. The cognate antitoxin is VapB18. The chain is Ribonuclease VapC18 from Mycobacterium tuberculosis (strain ATCC 25618 / H37Rv).